Reading from the N-terminus, the 58-residue chain is Photosystem II reaction center protein K (58 aa).

Residues 1 to 21 (MTVSYSIYLENSLHFGDALLA) constitute a propeptide that is removed on maturation. The helical transmembrane segment at 29–49 (IFDPIVDVMPVIPVFFLLLAF) threads the bilayer.

This sequence belongs to the PsbK family. In terms of assembly, PSII is composed of 1 copy each of membrane proteins PsbA, PsbB, PsbC, PsbD, PsbE, PsbF, PsbH, PsbI, PsbJ, PsbK, PsbL, PsbM, PsbT, PsbX, PsbY, PsbZ, Psb30/Ycf12, at least 3 peripheral proteins of the oxygen-evolving complex and a large number of cofactors. It forms dimeric complexes.

It localises to the plastid. The protein localises to the chloroplast thylakoid membrane. One of the components of the core complex of photosystem II (PSII). PSII is a light-driven water:plastoquinone oxidoreductase that uses light energy to abstract electrons from H(2)O, generating O(2) and a proton gradient subsequently used for ATP formation. It consists of a core antenna complex that captures photons, and an electron transfer chain that converts photonic excitation into a charge separation. This chain is Photosystem II reaction center protein K, found in Adiantum capillus-veneris (Maidenhair fern).